Consider the following 337-residue polypeptide: Thymidylate synthase (337 aa).

Residues R74 and 199 to 200 (RR) contribute to the dUMP site. C219 (nucleophile) is an active-site residue. DUMP-binding positions include 239 to 242 (RSGD), N250, and 280 to 282 (HIY). D242 lines the (6R)-5,10-methylene-5,6,7,8-tetrahydrofolate pocket. Residue A336 coordinates (6R)-5,10-methylene-5,6,7,8-tetrahydrofolate.

This sequence belongs to the thymidylate synthase family. In terms of assembly, homodimer.

It carries out the reaction dUMP + (6R)-5,10-methylene-5,6,7,8-tetrahydrofolate = 7,8-dihydrofolate + dTMP. Its pathway is pyrimidine metabolism; dTTP biosynthesis. The chain is Thymidylate synthase (70) from Homo sapiens (Human).